We begin with the raw amino-acid sequence, 293 residues long: Ribosomal protein L11 methyltransferase (293 aa).

Residues T145, G166, D188, and N230 each contribute to the S-adenosyl-L-methionine site.

This sequence belongs to the methyltransferase superfamily. PrmA family.

Its subcellular location is the cytoplasm. It carries out the reaction L-lysyl-[protein] + 3 S-adenosyl-L-methionine = N(6),N(6),N(6)-trimethyl-L-lysyl-[protein] + 3 S-adenosyl-L-homocysteine + 3 H(+). Functionally, methylates ribosomal protein L11. The chain is Ribosomal protein L11 methyltransferase from Citrobacter koseri (strain ATCC BAA-895 / CDC 4225-83 / SGSC4696).